Here is a 120-residue protein sequence, read N- to C-terminus: Aspartate 1-decarboxylase (120 aa).

Ser-25 acts as the Schiff-base intermediate with substrate; via pyruvic acid in catalysis. Ser-25 is subject to Pyruvic acid (Ser). Thr-57 contributes to the substrate binding site. Tyr-58 serves as the catalytic Proton donor. Substrate is bound at residue 73–75; the sequence is GAA.

This sequence belongs to the PanD family. Heterooctamer of four alpha and four beta subunits. The cofactor is pyruvate. In terms of processing, is synthesized initially as an inactive proenzyme, which is activated by self-cleavage at a specific serine bond to produce a beta-subunit with a hydroxyl group at its C-terminus and an alpha-subunit with a pyruvoyl group at its N-terminus.

It is found in the cytoplasm. It catalyses the reaction L-aspartate + H(+) = beta-alanine + CO2. The protein operates within cofactor biosynthesis; (R)-pantothenate biosynthesis; beta-alanine from L-aspartate: step 1/1. Its function is as follows. Catalyzes the pyruvoyl-dependent decarboxylation of aspartate to produce beta-alanine. The polypeptide is Aspartate 1-decarboxylase (Thermus thermophilus (strain ATCC 27634 / DSM 579 / HB8)).